The sequence spans 336 residues: Sulfate/thiosulfate import ATP-binding protein CysA (336 aa).

One can recognise an ABC transporter domain in the interval 3–233 (ITIENVSKSF…PASPFVMSFI (231 aa)). 35–42 (GPSGSGKS) contributes to the ATP binding site.

This sequence belongs to the ABC transporter superfamily. Sulfate/tungstate importer (TC 3.A.1.6) family. The complex is composed of two ATP-binding proteins (CysA), two transmembrane proteins (CysT and CysW) and a solute-binding protein (CysP).

It localises to the cell inner membrane. The catalysed reaction is sulfate(out) + ATP + H2O = sulfate(in) + ADP + phosphate + H(+). The enzyme catalyses thiosulfate(out) + ATP + H2O = thiosulfate(in) + ADP + phosphate + H(+). Part of the ABC transporter complex CysAWTP involved in sulfate/thiosulfate import. Responsible for energy coupling to the transport system. The polypeptide is Sulfate/thiosulfate import ATP-binding protein CysA (Thermosynechococcus vestitus (strain NIES-2133 / IAM M-273 / BP-1)).